The following is a 261-amino-acid chain: 14-3-3-like protein B (261 aa).

The interval 237–261 (DIPEDGEDSQKANGTAKFGGGDDAE) is disordered.

This sequence belongs to the 14-3-3 family.

The polypeptide is 14-3-3-like protein B (Vicia faba (Broad bean)).